The following is a 159-amino-acid chain: Probable chemoreceptor glutamine deamidase CheD 1 (159 aa).

It belongs to the CheD family.

It carries out the reaction L-glutaminyl-[protein] + H2O = L-glutamyl-[protein] + NH4(+). Functionally, probably deamidates glutamine residues to glutamate on methyl-accepting chemotaxis receptors (MCPs), playing an important role in chemotaxis. The protein is Probable chemoreceptor glutamine deamidase CheD 1 of Methanosarcina acetivorans (strain ATCC 35395 / DSM 2834 / JCM 12185 / C2A).